We begin with the raw amino-acid sequence, 431 residues long: Glutamate-1-semialdehyde 2,1-aminomutase (431 aa).

At lysine 269 the chain carries N6-(pyridoxal phosphate)lysine.

It belongs to the class-III pyridoxal-phosphate-dependent aminotransferase family. HemL subfamily. In terms of assembly, homodimer. The cofactor is pyridoxal 5'-phosphate.

The protein resides in the cytoplasm. The catalysed reaction is (S)-4-amino-5-oxopentanoate = 5-aminolevulinate. It participates in porphyrin-containing compound metabolism; protoporphyrin-IX biosynthesis; 5-aminolevulinate from L-glutamyl-tRNA(Glu): step 2/2. The protein operates within porphyrin-containing compound metabolism; chlorophyll biosynthesis. This is Glutamate-1-semialdehyde 2,1-aminomutase from Chlorobium phaeovibrioides (strain DSM 265 / 1930) (Prosthecochloris vibrioformis (strain DSM 265)).